The following is a 662-amino-acid chain: Protein associated with UVRAG as autophagy enhancer (662 aa).

Disordered stretches follow at residues 1 to 34 (MVSQSTVRQDSPVEPWEGISDHSGIIDGSPRLLN) and 58 to 131 (DVQQ…SLSS). Over residues 58–71 (DVQQQPQDLQSQVP) the composition is skewed to low complexity. Over residues 100–113 (AETTLSEDTTDSVG) the composition is skewed to polar residues. The segment covering 114–131 (SASPHGSSEKSSSFSLSS) has biased composition (low complexity). The residue at position 157 (serine 157) is a Phosphoserine; by MTOR. The segment at 196 to 235 (EVFVLPVDVEKENAHFYVADMIISAMEKMKCNILSQQQTE) is interaction with UVRAG. An N6-acetyllysine mark is found at lysine 483, lysine 523, lysine 533, lysine 573, and lysine 633.

Interacts with UVRAG; the interaction is direct and promotes association with the PI3K/PI3KC3 and HOPS complexes. Interacts with STX17. Phosphorylated by MTOR at Ser-157 under nutrient-rich conditions. Phosphorylation prevents acetylation by KAT5/TIP60 and impairs RUBCNL/PACER function and autophagosome maturation. Under autophagy induction, Phosphorylation by MTOR is repressed, enabling acetylation by KAT5/TIP60. Post-translationally, acetylated by KAT5/TIP60 under autophagy induction, promoting autophagosome maturation and lipid metabolism. Acetylation is prevented by phosphorylation by MTOR. Lys-483 and Lys-573 constitute the key sites for tuning function in autophagy. In terms of tissue distribution, expressed weakly in cervical carcinoma cell lines.

It localises to the cytoplasmic vesicle. It is found in the autophagosome membrane. Regulator of autophagy that promotes autophagosome maturation by facilitating the biogenesis of phosphatidylinositol 3-phosphate (PtdIns(3)P) in late steps of autophagy. Acts by antagonizing RUBCN, thereby stimulating phosphatidylinositol 3-kinase activity of the PI3K/PI3KC3 complex. Following anchorage to the autophagosomal SNARE STX17, promotes the recruitment of PI3K/PI3KC3 and HOPS complexes to the autophagosome to regulate the fusion specificity of autophagosomes with late endosomes/lysosomes. Binds phosphoinositides phosphatidylinositol 3-phosphate (PtdIns(3)P), 4-phosphate (PtdIns(4)P) and 5-phosphate (PtdIns(5)P). In addition to its role in autophagy, acts as a regulator of lipid and glycogen homeostasis. May act as a tumor suppressor. This is Protein associated with UVRAG as autophagy enhancer from Homo sapiens (Human).